We begin with the raw amino-acid sequence, 58 residues long: UPF0391 membrane protein GM21_0108 (58 aa).

Helical transmembrane passes span 4 to 24 (WALI…GGIA) and 33 to 53 (VLFY…LLAG).

Belongs to the UPF0391 family.

It is found in the cell membrane. In Geobacter sp. (strain M21), this protein is UPF0391 membrane protein GM21_0108.